A 490-amino-acid chain; its full sequence is Dual specificity protein kinase CLK3 (490 aa).

The interval 1-138 (MHHCKRYRSP…SKRSSRSVED (138 aa)) is disordered. Tyr7 bears the Phosphotyrosine mark. Phosphoserine is present on residues Ser9, Ser49, Ser51, Ser67, Ser76, and Ser78. Basic and acidic residues-rich tracts occupy residues 26–56 (YSREHEGRLRYPSRREPPPRRSRSRSHDRIP) and 63–76 (EHRDSDTYRCEERS). Positions 88 to 116 (RSRHRRRSRERGPYRTRKHAHHCHKRRTR) are enriched in basic residues. Over residues 117–130 (SCSSASSRSQQSSK) the composition is skewed to low complexity. Ser135 carries the phosphoserine modification. Residues 156 to 472 (YEIVGNLGEG…LAEALLHPFF (317 aa)) form the Protein kinase domain. ATP is bound by residues 162-170 (LGEGTFGKV) and Lys186. The active-site Proton acceptor is Asp283.

This sequence belongs to the protein kinase superfamily. CMGC Ser/Thr protein kinase family. Lammer subfamily. In terms of processing, autophosphorylates on all three types of residues.

It localises to the nucleus. It is found in the cytoplasm. The protein resides in the cytoplasmic vesicle. The protein localises to the secretory vesicle. Its subcellular location is the acrosome. The enzyme catalyses L-seryl-[protein] + ATP = O-phospho-L-seryl-[protein] + ADP + H(+). It carries out the reaction L-threonyl-[protein] + ATP = O-phospho-L-threonyl-[protein] + ADP + H(+). It catalyses the reaction L-tyrosyl-[protein] + ATP = O-phospho-L-tyrosyl-[protein] + ADP + H(+). Its activity is regulated as follows. Leucettine L41 inhibits its kinase activity and affects the regulation of alternative splicing mediated by phosphorylation of SR proteins. In terms of biological role, dual specificity kinase acting on both serine/threonine and tyrosine-containing substrates. Phosphorylates serine- and arginine-rich (SR) proteins of the spliceosomal complex. May be a constituent of a network of regulatory mechanisms that enable SR proteins to control RNA splicing and can cause redistribution of SR proteins from speckles to a diffuse nucleoplasmic distribution. Phosphorylates SRSF1 and SRSF3. Regulates the alternative splicing of tissue factor (F3) pre-mRNA in endothelial cells. This Rattus norvegicus (Rat) protein is Dual specificity protein kinase CLK3 (Clk3).